The following is a 141-amino-acid chain: MSSLLVKKLVESATTPMRGSEGAAGYDISSVEDVVVPAMGRIAVSTGISIRVPNGTYGRIAPRSGLAYKYGIDVLAGVIDSDYRGELKAILYNTTERDYIIKKGDRIAQLILEQIVTPDVAVVLELEDTARGGGGFGSTGI.

The protein belongs to the dUTPase family. Requires Mg(2+) as cofactor.

The catalysed reaction is dUTP + H2O = dUMP + diphosphate + H(+). It participates in pyrimidine metabolism; dUMP biosynthesis; dUMP from dCTP (dUTP route): step 2/2. This enzyme is involved in nucleotide metabolism: it produces dUMP, the immediate precursor of thymidine nucleotides and it decreases the intracellular concentration of dUTP so that uracil cannot be incorporated into DNA. The protein is Deoxyuridine 5'-triphosphate nucleotidohydrolase of Chlorella (PBCV-1).